We begin with the raw amino-acid sequence, 177 residues long: NADH-quinone oxidoreductase subunit B (177 aa).

Cysteine 56, cysteine 57, cysteine 121, and cysteine 151 together coordinate [4Fe-4S] cluster.

Belongs to the complex I 20 kDa subunit family. As to quaternary structure, NDH-1 is composed of 14 different subunits. Subunits NuoB, C, D, E, F, and G constitute the peripheral sector of the complex. It depends on [4Fe-4S] cluster as a cofactor.

Its subcellular location is the cell inner membrane. The enzyme catalyses a quinone + NADH + 5 H(+)(in) = a quinol + NAD(+) + 4 H(+)(out). Its function is as follows. NDH-1 shuttles electrons from NADH, via FMN and iron-sulfur (Fe-S) centers, to quinones in the respiratory chain. Couples the redox reaction to proton translocation (for every two electrons transferred, four hydrogen ions are translocated across the cytoplasmic membrane), and thus conserves the redox energy in a proton gradient. This is NADH-quinone oxidoreductase subunit B from Dinoroseobacter shibae (strain DSM 16493 / NCIMB 14021 / DFL 12).